A 385-amino-acid polypeptide reads, in one-letter code: SWI/SNF-related matrix-associated actin-dependent regulator of chromatin subfamily B member 1 (385 aa).

Residues 1-113 (MMMMALSKTF…DEKYKAVSIS (113 aa)) are DNA-binding. Glycyl lysine isopeptide (Lys-Gly) (interchain with G-Cter in SUMO2) cross-links involve residues K106, K108, and K124. S129 bears the Phosphoserine mark. K161 is covalently cross-linked (Glycyl lysine isopeptide (Lys-Gly) (interchain with G-Cter in SUMO2)). Positions 183-243 (PEVLVPIRLD…VPAIASAIRQ (61 aa)) are HIV-1 integrase-binding. 2 tandem repeats follow at residues 186–245 (LVPI…RQQI) and 259–319 (DQRV…RGQL). Positions 186-245 (LVPIRLDMEIDGQKLRDAFTWNMNEKLMTPEMFSEILCDDLDLNPLTFVPAIASAIRQQI) are MYC-binding. Residues 186-319 (LVPIRLDMEI…TIAYSIRGQL (134 aa)) are 2 X approximate tandem repeats. The segment at 304–318 (GGEFVTTIAYSIRGQ) is interaction with PPP1R15A.

This sequence belongs to the SNF5 family. As to quaternary structure, component of the multiprotein chromatin-remodeling complexes SWI/SNF: SWI/SNF-A (BAF), SWI/SNF-B (PBAF) and related complexes. The canonical complex contains a catalytic subunit (either SMARCA4/BRG1/BAF190A or SMARCA2/BRM/BAF190B) and at least SMARCE1, ACTL6A/BAF53, SMARCC1/BAF155, SMARCC2/BAF170, and SMARCB1/SNF5/BAF47. Other subunits specific to each of the complexes may also be present permitting several possible combinations developmentally and tissue specific. Component of the BAF complex, which includes at least actin (ACTB), ARID1A/BAF250A, ARID1B/BAF250B, SMARCA2/BRM, SMARCA4/BRG1/BAF190A, ACTL6A/BAF53, ACTL6B/BAF53B, SMARCE1/BAF57 SMARCC1/BAF155, SMARCC2/BAF170, SMARCB1/SNF5/INI1, and one or more SMARCD1/BAF60A, SMARCD2/BAF60B, or SMARCD3/BAF60C. In muscle cells, the BAF complex also contains DPF3. Component of neural progenitors-specific chromatin remodeling complex (npBAF complex) composed of at least, ARID1A/BAF250A or ARID1B/BAF250B, SMARCD1/BAF60A, SMARCD3/BAF60C, SMARCA2/BRM/BAF190B, SMARCA4/BRG1/BAF190A, SMARCB1/BAF47, SMARCC1/BAF155, SMARCE1/BAF57, SMARCC2/BAF170, PHF10/BAF45A, ACTL6A/BAF53A and actin. Component of neuron-specific chromatin remodeling complex (nBAF complex) composed of at least, ARID1A/BAF250A or ARID1B/BAF250B, SMARCD1/BAF60A, SMARCD3/BAF60C, SMARCA2/BRM/BAF190B, SMARCA4/BRG1/BAF190A, SMARCB1/BAF47, SMARCC1/BAF155, SMARCE1/BAF57, SMARCC2/BAF170, DPF1/BAF45B, DPF3/BAF45C, ACTL6B/BAF53B and actin. Component of the SWI/SNF-B (PBAF) chromatin remodeling complex, at least composed of SMARCA4/BRG1, SMARCB1/BAF47/SNF5, ACTL6A/BAF53A or ACTL6B/BAF53B, SMARCE1/BAF57, SMARCD1/BAF60A, SMARCD2/BAF60B, perhaps SMARCD3/BAF60C, SMARCC1/BAF155, SMARCC2/BAF170, PBRM1/BAF180, ARID2/BAF200 and actin. Binds to double-stranded DNA. Interacts with CEBPB (when not methylated). Interacts with PIH1D1. Interacts with MYK and MAEL. Interacts with PPP1R15A. Interacts with DPF2. Interacts with YWHAZ. Interacts with ERCC6. Interacts with FOS, FOSB isoform 1 and 2, FOSL1 and FOSL2. (Microbial infection) Binds tightly to the human immunodeficiency virus-type 1 (HIV-1) integrase in vitro and stimulates its DNA-joining activity. Interacts with human papillomavirus 18 E1 protein to stimulate its viral replication. Interacts with Epstein-Barr virus protein EBNA-2.

The protein resides in the nucleus. In terms of biological role, core component of the BAF (hSWI/SNF) complex. This ATP-dependent chromatin-remodeling complex plays important roles in cell proliferation and differentiation, in cellular antiviral activities and inhibition of tumor formation. The BAF complex is able to create a stable, altered form of chromatin that constrains fewer negative supercoils than normal. This change in supercoiling would be due to the conversion of up to one-half of the nucleosomes on polynucleosomal arrays into asymmetric structures, termed altosomes, each composed of 2 histones octamers. Stimulates in vitro the remodeling activity of SMARCA4/BRG1/BAF190A. Involved in activation of CSF1 promoter. Belongs to the neural progenitors-specific chromatin remodeling complex (npBAF complex) and the neuron-specific chromatin remodeling complex (nBAF complex). During neural development a switch from a stem/progenitor to a postmitotic chromatin remodeling mechanism occurs as neurons exit the cell cycle and become committed to their adult state. The transition from proliferating neural stem/progenitor cells to postmitotic neurons requires a switch in subunit composition of the npBAF and nBAF complexes. As neural progenitors exit mitosis and differentiate into neurons, npBAF complexes which contain ACTL6A/BAF53A and PHF10/BAF45A, are exchanged for homologous alternative ACTL6B/BAF53B and DPF1/BAF45B or DPF3/BAF45C subunits in neuron-specific complexes (nBAF). The npBAF complex is essential for the self-renewal/proliferative capacity of the multipotent neural stem cells. The nBAF complex along with CREST plays a role regulating the activity of genes essential for dendrite growth. Plays a key role in cell-cycle control and causes cell cycle arrest in G0/G1. This is SWI/SNF-related matrix-associated actin-dependent regulator of chromatin subfamily B member 1 (SMARCB1) from Homo sapiens (Human).